The sequence spans 628 residues: Chaperone protein HtpG (628 aa).

The tract at residues 1-334 (MTTTDTASET…SEDLPLNLSR (334 aa)) is a; substrate-binding. Residues 335–550 (EMLQNNPQLA…GFGPDRELEK (216 aa)) are b. Positions 551–628 (MLARANKGAA…LVLRGLVAHG (78 aa)) are c.

It belongs to the heat shock protein 90 family. Homodimer.

It localises to the cytoplasm. In terms of biological role, molecular chaperone. Has ATPase activity. The sequence is that of Chaperone protein HtpG from Rhodopseudomonas palustris (strain BisB5).